Here is a 135-residue protein sequence, read N- to C-terminus: Small ribosomal subunit protein uS9 (135 aa).

The segment covering 108–118 (VGDPRRTEPHK) has biased composition (basic and acidic residues). Residues 108–135 (VGDPRRTEPHKPNRSTKGPRAKRQKSYR) are disordered. Residues 119–135 (PNRSTKGPRAKRQKSYR) show a composition bias toward basic residues.

This sequence belongs to the universal ribosomal protein uS9 family.

The chain is Small ribosomal subunit protein uS9 (rps9) from Pyrococcus abyssi (strain GE5 / Orsay).